Here is a 354-residue protein sequence, read N- to C-terminus: Holliday junction branch migration complex subunit RuvB (354 aa).

Residues 1–183 form a large ATPase domain (RuvB-L) region; it reads MTGDNLVSAY…FGFVAHLDFY (183 aa). ATP-binding positions include Arg-23, Gly-64, Lys-67, Thr-68, Ser-69, 130–132, Arg-173, Tyr-183, and Arg-220; that span reads EDF. Thr-68 contributes to the Mg(2+) binding site. The interval 184–254 is small ATPAse domain (RuvB-S); that stretch reads SPADLETLLH…AARAALLVYD (71 aa). The segment at 257-354 is head domain (RuvB-H); the sequence is ALGLDRLDRQ…DLFSVEPDQP (98 aa). Residues Arg-312 and Arg-317 each coordinate DNA. The interval 330–354 is disordered; it reads TPPNGIFGSDAPPASDLFSVEPDQP.

The protein belongs to the RuvB family. As to quaternary structure, homohexamer. Forms an RuvA(8)-RuvB(12)-Holliday junction (HJ) complex. HJ DNA is sandwiched between 2 RuvA tetramers; dsDNA enters through RuvA and exits via RuvB. An RuvB hexamer assembles on each DNA strand where it exits the tetramer. Each RuvB hexamer is contacted by two RuvA subunits (via domain III) on 2 adjacent RuvB subunits; this complex drives branch migration. In the full resolvosome a probable DNA-RuvA(4)-RuvB(12)-RuvC(2) complex forms which resolves the HJ.

It is found in the cytoplasm. The enzyme catalyses ATP + H2O = ADP + phosphate + H(+). Functionally, the RuvA-RuvB-RuvC complex processes Holliday junction (HJ) DNA during genetic recombination and DNA repair, while the RuvA-RuvB complex plays an important role in the rescue of blocked DNA replication forks via replication fork reversal (RFR). RuvA specifically binds to HJ cruciform DNA, conferring on it an open structure. The RuvB hexamer acts as an ATP-dependent pump, pulling dsDNA into and through the RuvAB complex. RuvB forms 2 homohexamers on either side of HJ DNA bound by 1 or 2 RuvA tetramers; 4 subunits per hexamer contact DNA at a time. Coordinated motions by a converter formed by DNA-disengaged RuvB subunits stimulates ATP hydrolysis and nucleotide exchange. Immobilization of the converter enables RuvB to convert the ATP-contained energy into a lever motion, pulling 2 nucleotides of DNA out of the RuvA tetramer per ATP hydrolyzed, thus driving DNA branch migration. The RuvB motors rotate together with the DNA substrate, which together with the progressing nucleotide cycle form the mechanistic basis for DNA recombination by continuous HJ branch migration. Branch migration allows RuvC to scan DNA until it finds its consensus sequence, where it cleaves and resolves cruciform DNA. The polypeptide is Holliday junction branch migration complex subunit RuvB (Salinispora arenicola (strain CNS-205)).